A 647-amino-acid polypeptide reads, in one-letter code: Homologous recombination OB-fold protein (647 aa).

At Ser-47 the chain carries Phosphoserine. 3 disordered regions span residues 284–361 (ARGT…GPQG), 380–399 (SRTP…RRFP), and 581–631 (SFLK…DDLD). Arg-285, Arg-295, Arg-329, and Arg-337 each carry asymmetric dimethylarginine. Over residues 287 to 308 (TIQSSPQNRFPCQPFQSPSSWL) the composition is skewed to polar residues. Low complexity predominate over residues 319–332 (TPNSSCSTPSRTSS). The span at 380 to 390 (SRTPQQPTHPS) shows a compositional bias: polar residues. The segment covering 618-631 (ASPEEELPEADDLD) has biased composition (acidic residues).

As to quaternary structure, interacts with MCM8; this interaction is necessary for MCM8-MCM9 helicase complex recruitment to DNA damage sites. Interacts with RPA1; this interaction associates HROB with the RPA complex.

The protein resides in the nucleus. The protein localises to the chromosome. Functionally, DNA-binding protein involved in homologous recombination that acts by recruiting the MCM8-MCM9 helicase complex to sites of DNA damage to promote DNA repair synthesis. The protein is Homologous recombination OB-fold protein of Homo sapiens (Human).